The sequence spans 340 residues: GPALPP motifs-containing protein 1 (340 aa).

Residues 1-304 (MARDLIGPAL…PQERIPFDRD (304 aa)) form a disordered region. At A2 the chain carries N-acetylalanine. Residues 7–12 (GPALPP) carry the GPALPP motif 1 motif. S28 carries the post-translational modification Phosphoserine. A GPALPP motif 2 motif is present at residues 32–37 (GPALPP). Positions 60–69 (GNQESEEDDS) are enriched in acidic residues. The short motif at 92-97 (GPALPP) is the GPALPP motif 3 element. S105 bears the Phosphoserine mark. Residues 107–116 (PRPIIGPALP) are compositionally biased toward pro residues. A GPALPP motif 4 motif is present at residues 112–117 (GPALPP). The span at 124 to 133 (QKSDKGRDDP) shows a compositional bias: basic and acidic residues. T138 is modified (phosphothreonine). Phosphoserine occurs at positions 140 and 141. Composition is skewed to basic and acidic residues over residues 163 to 187 (EFEK…KPIV), 227 to 261 (PADR…KRLA), 269 to 279 (ESKRSESLMDI), and 287 to 304 (KAAE…FDRD). A Glycyl lysine isopeptide (Lys-Gly) (interchain with G-Cter in SUMO2) cross-link involves residue K271. K308 is covalently cross-linked (Glycyl lysine isopeptide (Lys-Gly) (interchain with G-Cter in SUMO2)).

The chain is GPALPP motifs-containing protein 1 (GPALPP1) from Homo sapiens (Human).